A 357-amino-acid polypeptide reads, in one-letter code: Chorismate synthase (357 aa).

Arg47 serves as a coordination point for NADP(+). Residues 123–125, Gly281, 296–300, and Arg324 each bind FMN; these read RAS and KPTSS.

The protein belongs to the chorismate synthase family. As to quaternary structure, homotetramer. FMNH2 is required as a cofactor.

The enzyme catalyses 5-O-(1-carboxyvinyl)-3-phosphoshikimate = chorismate + phosphate. Its pathway is metabolic intermediate biosynthesis; chorismate biosynthesis; chorismate from D-erythrose 4-phosphate and phosphoenolpyruvate: step 7/7. In terms of biological role, catalyzes the anti-1,4-elimination of the C-3 phosphate and the C-6 proR hydrogen from 5-enolpyruvylshikimate-3-phosphate (EPSP) to yield chorismate, which is the branch point compound that serves as the starting substrate for the three terminal pathways of aromatic amino acid biosynthesis. This reaction introduces a second double bond into the aromatic ring system. This is Chorismate synthase from Chlamydia trachomatis serovar D (strain ATCC VR-885 / DSM 19411 / UW-3/Cx).